A 59-amino-acid chain; its full sequence is Cuticle protein 7 isoform c (59 aa).

Q1 carries the pyrrolidone carboxylic acid modification.

In Limulus polyphemus (Atlantic horseshoe crab), this protein is Cuticle protein 7 isoform c.